A 423-amino-acid chain; its full sequence is Transducer protein Htr13 (423 aa).

Polar residues predominate over residues 1-19 (MTGPDNSLTDPSASPSTPV). The segment at 1–21 (MTGPDNSLTDPSASPSTPVAS) is disordered. One can recognise a Methyl-accepting transducer domain in the interval 152-388 (AVAELIERAR…ELTMMIDEAA (237 aa)).

It belongs to the methyl-accepting chemotaxis (MCP) protein family. In terms of processing, methylated by CheR.

It localises to the cytoplasm. In terms of biological role, potentially involved in chemo- or phototactic signal transduction. This Halobacterium salinarum (strain ATCC 29341 / DSM 671 / R1) protein is Transducer protein Htr13 (htr13).